Reading from the N-terminus, the 346-residue chain is Olfactory receptor 8G5 (346 aa).

Over 1-60 (MIIYKQGITFLQKENNNTIHLNTMFFLSPAETHQRMAAENHSFVTKFILVGLTEKSELQL) the chain is Extracellular. N-linked (GlcNAc...) asparagine glycosylation is found at Asn16 and Asn40. Residues 61–81 (PLFLVFLGIYVVTVLGNLGMI) traverse the membrane as a helical segment. The Cytoplasmic segment spans residues 82-89 (TLIGLSSH). Residues 90–110 (LHTPMYCFLSSLSFIDFCHST) form a helical membrane-spanning segment. Residues 111 to 134 (VITPKMLVNFVTEKNIISYPECMT) are Extracellular-facing. An intrachain disulfide couples Cys132 to Cys214. The chain crosses the membrane as a helical span at residues 135 to 155 (QLYFFLVFAIAECHMLAAMAY). Topologically, residues 156–174 (DGYVAICSPLLYSIIISNK) are cytoplasmic. A helical membrane pass occupies residues 175 to 195 (ACFSLILVVYVIGLICASAHI). The Extracellular segment spans residues 196 to 232 (GCMFRVQFCKFDVINHYFCDLISILKLSCSSTYINEL). Residues 233–252 (LILIFSGINILVPSLTILSS) form a helical membrane-spanning segment. At 253-272 (YIFIIASILRIRYTEGRSKA) the chain is on the cytoplasmic side. The chain crosses the membrane as a helical span at residues 273-293 (FSTCSSHISAVSVFFGSAAFM). Residues 294–306 (YLQPSSVSSMDQG) are Extracellular-facing. Residues 307–327 (KVSSVFYTIVVPMLNPLIYSL) form a helical membrane-spanning segment. Residues 328 to 346 (RNKDVHVALKKTLGKRTFL) lie on the Cytoplasmic side of the membrane.

This sequence belongs to the G-protein coupled receptor 1 family.

The protein localises to the cell membrane. Odorant receptor. This Homo sapiens (Human) protein is Olfactory receptor 8G5 (OR8G5).